The chain runs to 125 residues: Translation initiation factor 5A (125 aa).

Hypusine is present on Lys35.

It belongs to the eIF-5A family.

The protein localises to the cytoplasm. In terms of biological role, functions by promoting the formation of the first peptide bond. This Methanoregula boonei (strain DSM 21154 / JCM 14090 / 6A8) protein is Translation initiation factor 5A (eIF5A).